A 346-amino-acid polypeptide reads, in one-letter code: DnaJ protein ERDJ3B (346 aa).

An N-terminal signal peptide occupies residues 1-23 (MAIRWSELCIVLFALSYAICVLA). In terms of domain architecture, J spans 26–91 (SYYDVLQVPK…EKREIYNKYG (66 aa)). Asparagine 267 carries an N-linked (GlcNAc...) asparagine glycan.

As to quaternary structure, interacts with SDF2 and MED37A/BIP1. N-glycosylated. Expressed in leaves, flower buds and flowers.

It localises to the endoplasmic reticulum lumen. Its function is as follows. Regulates protein folding in the endoplasmic reticulum (ER) lumen. Forms a complex in the ER with SDF2 and MED37A/BIP1 which is required for the proper accumulation and function of the surface-exposed leucine-rich repeat receptor kinases EFR involved in pathogen-associated molecular pattern (PAMP) triggered immunity. In Arabidopsis thaliana (Mouse-ear cress), this protein is DnaJ protein ERDJ3B (ERDJ3B).